Here is a 496-residue protein sequence, read N- to C-terminus: DEAD-box ATP-dependent RNA helicase 38 (496 aa).

The tract at residues 1–91 (MADTVEKVPT…SGDTPYTSAS (91 aa)) is disordered. A2 is modified (N-acetylalanine). The segment covering 7–25 (KVPTVVESSSSSTVEASNS) has biased composition (low complexity). The segment covering 27–40 (EKTEPTTEKKKWGD) has biased composition (basic and acidic residues). Residues 41-51 (VEDDDDEEEAV) show a composition bias toward acidic residues. Polar residues predominate over residues 78-91 (KAVTSGDTPYTSAS). A Q motif motif is present at residues 91–120 (SRFEDLNLSPELMKGLYVEMKFEKPSKIQA). The Helicase ATP-binding domain occupies 125–301 (MIMTPPHKHL…ARTVKDPNQL (177 aa)). 138 to 145 (AHNGSGKT) contacts ATP. The short motif at 245–248 (DEAD) is the DEAD box element. The 155-residue stretch at 329–483 (VIKDQIMELG…EIKSWNSEEE (155 aa)) folds into the Helicase C-terminal domain.

The protein belongs to the DEAD box helicase family. DDX19/DBP5 subfamily. In terms of assembly, interacts with NUP214 (via N-terminus). In terms of tissue distribution, constitutively expressed.

The protein localises to the cytoplasm. Its subcellular location is the nucleus. The enzyme catalyses ATP + H2O = ADP + phosphate + H(+). ATP-dependent RNA helicase essential for mRNA export from the nucleus. Plays an important role in the positive regulation of CBF/DREB transcription factors. In Arabidopsis thaliana (Mouse-ear cress), this protein is DEAD-box ATP-dependent RNA helicase 38 (RH38).